The sequence spans 70 residues: Small ribosomal subunit protein bS18c (70 aa).

Belongs to the bacterial ribosomal protein bS18 family. Part of the 30S ribosomal subunit.

The protein resides in the plastid. Its subcellular location is the chloroplast. The chain is Small ribosomal subunit protein bS18c from Gracilaria tenuistipitata var. liui (Red alga).